The primary structure comprises 221 residues: Ribonuclease HII (221 aa).

The RNase H type-2 domain occupies 29–220 (RRVAGVDEVG…LRDLQAGEIG (192 aa)). Residues Asp-35, Glu-36, and Asp-129 each contribute to the a divalent metal cation site. The interval 198–221 (LGPSPQHRRSFAPLRDLQAGEIGG) is disordered.

Belongs to the RNase HII family. It depends on Mn(2+) as a cofactor. Mg(2+) serves as cofactor.

The protein resides in the cytoplasm. The catalysed reaction is Endonucleolytic cleavage to 5'-phosphomonoester.. Functionally, endonuclease that specifically degrades the RNA of RNA-DNA hybrids. In Synechococcus sp. (strain JA-3-3Ab) (Cyanobacteria bacterium Yellowstone A-Prime), this protein is Ribonuclease HII.